The sequence spans 210 residues: Large ribosomal subunit protein uL3 (210 aa).

This sequence belongs to the universal ribosomal protein uL3 family. Part of the 50S ribosomal subunit. Forms a cluster with proteins L14 and L19.

Functionally, one of the primary rRNA binding proteins, it binds directly near the 3'-end of the 23S rRNA, where it nucleates assembly of the 50S subunit. This is Large ribosomal subunit protein uL3 from Geobacter sulfurreducens (strain ATCC 51573 / DSM 12127 / PCA).